The chain runs to 430 residues: Protein IQ-DOMAIN 3 (430 aa).

The interval 1-36 is disordered; it reads MGKSWFSAVKKALSPEPKQKKEQKPHKSKKWFGKSK. The Nuclear localization signal 1 signature appears at 9 to 16; it reads VKKALSPE. The span at 23 to 35 shows a compositional bias: basic residues; that stretch reads QKPHKSKKWFGKS. Residues 107 to 135 form the IQ domain; the sequence is EEIAAIKIQTAFRGYMARRALRALRGLVR. Residues 170 to 224 are a coiled coil; it reads RLRLSEDKQALTRQLQQKHNKDFDKTGENWNDSTLSREKVEANMLNKQVATMRRE. Positions 213 to 231 are calmodulin-binding; that stretch reads MLNKQVATMRREKALAYAF. Disordered stretches follow at residues 271–368 and 385–430; these read ENHS…SQSV and SNLS…TNLA. A compositionally biased stretch (low complexity) spans 286–295; the sequence is ARSVASRAMS. Positions 326–340 are enriched in polar residues; it reads SEDSNSIVSFQSEQP. Positions 396–403 match the Nuclear localization signal 2 motif; sequence AKKRLSFS.

The protein belongs to the IQD family. As to quaternary structure, binds to multiple calmodulin (CaM) in the presence of Ca(2+) and CaM-like proteins.

The protein resides in the nucleus. It is found in the nucleolus. Its subcellular location is the cytoplasm. The protein localises to the cytoskeleton. May be involved in cooperative interactions with calmodulins or calmodulin-like proteins. Recruits calmodulin proteins to microtubules, thus being a potential scaffold in cellular signaling and trafficking. May associate with nucleic acids and regulate gene expression at the transcriptional or post-transcriptional level. The sequence is that of Protein IQ-DOMAIN 3 from Arabidopsis thaliana (Mouse-ear cress).